The primary structure comprises 212 residues: 3-isopropylmalate dehydratase small subunit (212 aa).

Belongs to the LeuD family. LeuD type 1 subfamily. Heterodimer of LeuC and LeuD.

It carries out the reaction (2R,3S)-3-isopropylmalate = (2S)-2-isopropylmalate. It functions in the pathway amino-acid biosynthesis; L-leucine biosynthesis; L-leucine from 3-methyl-2-oxobutanoate: step 2/4. Functionally, catalyzes the isomerization between 2-isopropylmalate and 3-isopropylmalate, via the formation of 2-isopropylmaleate. The polypeptide is 3-isopropylmalate dehydratase small subunit (Thiobacillus denitrificans (strain ATCC 25259 / T1)).